Consider the following 464-residue polypeptide: NAD(P) transhydrogenase subunit beta (464 aa).

A run of 6 helical transmembrane segments spans residues 54-74 (VQAY…GTVI), 86-106 (LVAA…TGAL), 126-146 (VEMS…VIAF), 164-184 (HPLN…FAAT), 191-211 (FALM…IGGA), and 227-247 (AAAG…GALV). NADP(+) is bound by residues 316-317 (YG), 348-353 (VAGRMP), 390-394 (GANDV), 425-432 (KRSMASGY), and 451-452 (DA).

This sequence belongs to the PNT beta subunit family. Complex of an alpha and a beta chain; in Rhodospirillum, the alpha chain seems to be made of two subunits.

The protein localises to the cell inner membrane. It carries out the reaction NAD(+) + NADPH + H(+)(in) = NADH + NADP(+) + H(+)(out). The transhydrogenation between NADH and NADP is coupled to respiration and ATP hydrolysis and functions as a proton pump across the membrane. In Rhodospirillum rubrum (strain ATCC 11170 / ATH 1.1.1 / DSM 467 / LMG 4362 / NCIMB 8255 / S1), this protein is NAD(P) transhydrogenase subunit beta (pntB).